A 528-amino-acid chain; its full sequence is MTKSHSEEVIVPEFNSSAKELPRPLAEKCPSIIKKFISAYDAKPDFVARSPGRVNLIGEHIDYCDFSVLPLAIDFDMLCAVKVLNEKNPSITLINADPKFAQRKFDLPLDGSYVTIDPSVSDWSNYFKCGLHVAHSFLKKLAPERFASAPLAGLQVFCEGDVPTGSGLSSSAAFICAVALAVVKANMGPGYHMSKQNLMRITVVAEHYVGVNNGGMDQAASVCGEEDHALYVEFKPQLKATPFKFPQLKNHEISFVIANTLVVSNKFETAPTNYNLRVVEVTTAANVLAATYGVVLLSGKEGSSTNKGNLRDFMNVYYARYHNISTPWNGDIESGIERLTKMLVLVEESLANKKQGFSVDDVAQSLNCSREEFTRDYLTTSPVRFQVLKLYQRAKHVYSESLRVLKAVKLMTTASFTADEDFFKQFGALMNESQASCDKLYECSCPEIDKICSIALSNGSYGSRLTGAGWGGCTVHLVPGGPNGNIEKVKEALANEFYKVKYPKITDAELENAIIVSKPALGSCLYEL.

Arginine 53, glutamate 59, histidine 60, and aspartate 62 together coordinate alpha-D-galactose. Glycine 165, glycine 167, serine 169, and serine 170 together coordinate ATP. The alpha-D-galactose site is built by asparagine 213 and aspartate 217. Aspartate 217 functions as the Proton acceptor in the catalytic mechanism. Positions 264, 265, and 266 each coordinate ATP. Tyrosine 274 provides a ligand contact to alpha-D-galactose. At serine 381 the chain carries Phosphoserine.

It belongs to the GHMP kinase family. GalK subfamily.

The catalysed reaction is alpha-D-galactose + ATP = alpha-D-galactose 1-phosphate + ADP + H(+). It functions in the pathway carbohydrate metabolism; galactose metabolism. Functionally, galactokinase is a key enzyme in the galactose metabolism where it catalyzes the conversion of alpha-D-galactose to galactose 1-phosphate. Can also induce the transcription of the yeast GAL genes in response to the organism being challenged with galactose as the sole source of carbon. It's striking amino acid sequence similarity to GAL3 might explain its GAL3-like induction activity. This is Galactokinase from Saccharomyces cerevisiae (strain ATCC 204508 / S288c) (Baker's yeast).